The sequence spans 397 residues: Phosphoglycerate kinase (397 aa).

Substrate is bound by residues 21–23, arginine 37, 60–63, arginine 120, and arginine 153; these read DFN and HLGR. Residues lysine 206, glycine 296, glutamate 327, and 353 to 356 each bind ATP; that span reads GGDS.

It belongs to the phosphoglycerate kinase family. As to quaternary structure, monomer.

The protein resides in the cytoplasm. It carries out the reaction (2R)-3-phosphoglycerate + ATP = (2R)-3-phospho-glyceroyl phosphate + ADP. It participates in carbohydrate degradation; glycolysis; pyruvate from D-glyceraldehyde 3-phosphate: step 2/5. This Rhodopirellula baltica (strain DSM 10527 / NCIMB 13988 / SH1) protein is Phosphoglycerate kinase.